The primary structure comprises 490 residues: uncharacterized protein (490 aa).

Residues 1–19 (MSITSVSLYVYLICAGGHA) form the signal peptide.

This sequence belongs to the mimivirus L137 family.

This is an uncharacterized protein from Acanthamoeba polyphaga (Amoeba).